A 448-amino-acid chain; its full sequence is tRNA-2-methylthio-N(6)-dimethylallyladenosine synthase (448 aa).

An MTTase N-terminal domain is found at 2–119 (KKLYIKTFGC…LSDLIAKRRE (118 aa)). Residues cysteine 11, cysteine 48, cysteine 82, cysteine 156, cysteine 160, and cysteine 163 each coordinate [4Fe-4S] cluster. In terms of domain architecture, Radical SAM core spans 142 to 377 (RQTRGSAYVS…LVESQANQIS (236 aa)). Residues 378–444 (QKMLGNIERV…NYTLRGKLVE (67 aa)) enclose the TRAM domain.

The protein belongs to the methylthiotransferase family. MiaB subfamily. In terms of assembly, monomer. Requires [4Fe-4S] cluster as cofactor.

It localises to the cytoplasm. The enzyme catalyses N(6)-dimethylallyladenosine(37) in tRNA + (sulfur carrier)-SH + AH2 + 2 S-adenosyl-L-methionine = 2-methylsulfanyl-N(6)-dimethylallyladenosine(37) in tRNA + (sulfur carrier)-H + 5'-deoxyadenosine + L-methionine + A + S-adenosyl-L-homocysteine + 2 H(+). Catalyzes the methylthiolation of N6-(dimethylallyl)adenosine (i(6)A), leading to the formation of 2-methylthio-N6-(dimethylallyl)adenosine (ms(2)i(6)A) at position 37 in tRNAs that read codons beginning with uridine. This is tRNA-2-methylthio-N(6)-dimethylallyladenosine synthase from Polynucleobacter necessarius subsp. necessarius (strain STIR1).